Reading from the N-terminus, the 357-residue chain is CCN family member 3 (357 aa).

The N-terminal stretch at 1–31 (MQSVQSTSFCLRKQCLCLTFLLLHLLGQVAA) is a signal peptide. In terms of domain architecture, IGFBP N-terminal spans 32-105 (TQRCPPQCPG…SNQTGICTAV (74 aa)). Disulfide bonds link Cys35–Cys61, Cys39–Cys63, Cys43–Cys64, Cys50–Cys67, Cys75–Cys89, and Cys81–Cys102. Residue Asn97 is glycosylated (N-linked (GlcNAc...) asparagine). One can recognise a VWFC domain in the interval 108–174 (DNCVFDGVIY…GECCEKWICG (67 aa)). Residues 205–250 (NCIEQTTEWTACSKSCGMGFSTRVTNRNRQCEMLKQTRLCMVRPCE) form the TSP type-1 domain. Cys244 carries the S-palmitoyl cysteine lipid modification. Intrachain disulfides connect Cys264/Cys301, Cys281/Cys315, Cys292/Cys331, Cys295/Cys333, and Cys300/Cys337. The CTCK domain occupies 264 to 338 (CLRTKKSLKA…GTCTCHTNCP (75 aa)). An N-linked (GlcNAc...) asparagine glycan is attached at Asn280.

Belongs to the CCN family. Interacts with FBLN1. Interacts (via CTCK domain) with NOTCH1 (via the EGF-like repeat region). Interacts with GJA1/CX43. Interacts with ITGA5:ITGB1, ITGAV:ITGB3 and ITGAV:ITGB5. Interacts with ZDHHC22; the interaction may lead to CCN3 palmitoylation. Post-translationally, may be palmitoylated on Cys-244, which is important for extracellular secretion. In terms of tissue distribution, expressed in endothelial cells (at protein level). Expressed in bone marrow and thymic cells.

It is found in the secreted. The protein resides in the cytoplasm. The protein localises to the cell junction. Its subcellular location is the gap junction. In terms of biological role, immediate-early protein playing a role in various cellular processes including proliferation, adhesion, migration, differentiation and survival. Acts by binding to integrins or membrane receptors such as NOTCH1. Essential regulator of hematopoietic stem and progenitor cell function. Inhibits myogenic differentiation through the activation of Notch-signaling pathway. Inhibits vascular smooth muscle cells proliferation by increasing expression of cell-cycle regulators such as CDKN2B or CDKN1A independently of TGFB1 signaling. Ligand of integrins ITGAV:ITGB3 and ITGA5:ITGB1, acts directly upon endothelial cells to stimulate pro-angiogenic activities and induces angiogenesis. In endothelial cells, supports cell adhesion, induces directed cell migration (chemotaxis) and promotes cell survival. Also plays a role in cutaneous wound healing acting as integrin receptor ligand. Supports skin fibroblast adhesion through ITGA5:ITGB1 and ITGA6:ITGB1 and induces fibroblast chemotaxis through ITGAV:ITGB5. Seems to enhance bFGF-induced DNA synthesis in fibroblasts. Involved in bone regeneration as a negative regulator. Enhances the articular chondrocytic phenotype, whereas it repressed the one representing endochondral ossification. Impairs pancreatic beta-cell function, inhibits beta-cell proliferation and insulin secretion. Plays a role as negative regulator of endothelial pro-inflammatory activation reducing monocyte adhesion, its anti-inflammatory effects occur secondary to the inhibition of NF-kappaB signaling pathway. Contributes to the control and coordination of inflammatory processes in atherosclerosis. Attenuates inflammatory pain through regulation of IL1B- and TNF-induced MMP9, MMP2 and CCL2 expression. Inhibits MMP9 expression through ITGB1 engagement. Brain osteoanabolic hormone. Drives osteogenesis in osteochondral skeletal stem cells. During lactation, maintains the maternal skeleton and viability of offspring. The sequence is that of CCN family member 3 from Homo sapiens (Human).